The chain runs to 197 residues: Small ribosomal subunit protein uS7 (197 aa).

The protein belongs to the universal ribosomal protein uS7 family.

This Cicer arietinum (Chickpea) protein is Small ribosomal subunit protein uS7 (RPS5).